The chain runs to 214 residues: MAGPAAHFSDEQFREACAELQKPALTGADWQLLVEASGITIYRLLDQSTGLYEYKVFGVLESCIPSLLADVYMDLDYRKKWDQYVKELYEKSFDGQMVAYWEVKYPFPLSNRDYVYTRQRRDLDVDGRKIYVVLAQNISVPQFPEKSGVIRVKQYKQSLAIESDGKKGSRVFMYYFDNPGGQIPSWLINWAAKNGVPSFLKDMVKACQNYHKKT.

Met1 is modified (N-acetylmethionine). One can recognise an START domain in the interval 1–212 (MAGPAAHFSD…MVKACQNYHK (212 aa)). A 1,2-diacyl-sn-glycero-3-phosphocholine contacts are provided by Tyr72 and Arg78. A Phosphoserine modification is found at Ser139. Residue Gln157 participates in a 1,2-diacyl-sn-glycero-3-phosphocholine binding.

As to quaternary structure, interacts with ACOT13/THEM2.

It is found in the cytoplasm. Lipid transfer protein that promotes intermembrane transfer of phosphatidylcholines but no other phospholipids. Binds a single lipid molecule. May play a role in hepatocellular selection and transport of phosphatidylcholines during bile formation. The polypeptide is Phosphatidylcholine transfer protein (Pctp) (Rattus norvegicus (Rat)).